A 1940-amino-acid polypeptide reads, in one-letter code: Myosin-1B (1940 aa).

The Myosin N-terminal SH3-like domain maps to 33–82; it reads DAKSSVFVVHAKESYVKSTIQSKESGKVTVKTEGGETLTVKEDQIFSMNP. Residues 86–783 form the Myosin motor domain; that stretch reads DKIEDMAMMT…LLGLLEEMRD (698 aa). Lys130 is modified (N6,N6,N6-trimethyllysine). 179–186 serves as a coordination point for ATP; it reads GESGAGKT. 2 actin-binding regions span residues 660–682 and 762–776; these read LNKLMSNLRSTHPHFVRCLIPNE and KFGHTKVFFKAGLLG. The region spanning 786–815 is the IQ domain; that stretch reads LAQLITRTQARCRGFLMRVEFKKMMERRES. Residues 844–1940 adopt a coiled-coil conformation; it reads LLKSAESEKE…EIGKKAESEE (1097 aa). The tract at residues 1912-1940 is disordered; sequence EERADIAESQVNKLRAKSREIGKKAESEE. The span at 1928–1940 shows a compositional bias: basic and acidic residues; the sequence is KSREIGKKAESEE.

It belongs to the TRAFAC class myosin-kinesin ATPase superfamily. Myosin family. In terms of assembly, muscle myosin is a hexameric protein that consists of 2 heavy chain subunits (MHC), 2 alkali light chain subunits (MLC) and 2 regulatory light chain subunits (MLC-2).

It localises to the cytoplasm. The protein localises to the myofibril. Functionally, muscle contraction. This Gallus gallus (Chicken) protein is Myosin-1B (MYH1B).